The following is an 83-amino-acid chain: Small ribosomal subunit protein bS16 (83 aa).

The protein belongs to the bacterial ribosomal protein bS16 family.

The chain is Small ribosomal subunit protein bS16 from Shewanella denitrificans (strain OS217 / ATCC BAA-1090 / DSM 15013).